Consider the following 240-residue polypeptide: Protein FANTASTIC FOUR 2 (240 aa).

2 disordered regions span residues 89-124 (TTPR…PPIK) and 177-229 (LLSH…KPML). The FAF domain occupies 117–171 (NSFPPPIKFVEDSKYNRMVRWLGEDGRIVVQAIRVSSPPSCFVSERGEGRLRLIL). Residues 184–200 (EEEEEETEEGIDEETSE) are compositionally biased toward acidic residues. Positions 207-216 (GNKKFSRFSR) are enriched in basic residues. A compositionally biased stretch (basic and acidic residues) spans 217–226 (RCKENGREPK).

This sequence belongs to the fantastic four family. As to expression, expressed in the shoot apex, stamens, carpels and young siliques. Detected in provascular and vascular tissue, and in the center of the vegetative and inflorescence meristems. Expressed in the funiculus. In roots and leaves, predominantly expressed in phloem.

Regulates the size of the shoot meristem by modulating the CLV3-WUS feedback loop. Can repress WUS but is under negative control by CLV3. The polypeptide is Protein FANTASTIC FOUR 2 (FAF2) (Arabidopsis thaliana (Mouse-ear cress)).